A 119-amino-acid chain; its full sequence is UPF0102 protein CGSHiGG_01960 (119 aa).

It belongs to the UPF0102 family.

The sequence is that of UPF0102 protein CGSHiGG_01960 from Haemophilus influenzae (strain PittGG).